A 357-amino-acid chain; its full sequence is uncharacterized protein (357 aa).

3 helical membrane-spanning segments follow: residues 21 to 41 (FIKI…LFSW), 86 to 106 (FFCL…CTLF), and 135 to 155 (GGFV…PVIF). 2 disordered regions span residues 184–229 (DKNK…AMSD) and 283–357 (KAGS…NKRN). Residues 195–223 (TTNTTNFSGNGSSSSTTNATSSSSSQANN) are compositionally biased toward low complexity. Composition is skewed to basic and acidic residues over residues 305 to 314 (KIEEYDNQKQ) and 322 to 337 (KETN…EKET). Residues 305-337 (KIEEYDNQKQEEEENEEKETNKQQTQKDDEKET) adopt a coiled-coil conformation. The span at 346-357 (KKSKKGKKNKRN) shows a compositional bias: basic residues.

The protein resides in the membrane. This is an uncharacterized protein from Dictyostelium discoideum (Social amoeba).